Consider the following 158-residue polypeptide: Transcription elongation factor GreA (158 aa).

The protein belongs to the GreA/GreB family.

Necessary for efficient RNA polymerase transcription elongation past template-encoded arresting sites. The arresting sites in DNA have the property of trapping a certain fraction of elongating RNA polymerases that pass through, resulting in locked ternary complexes. Cleavage of the nascent transcript by cleavage factors such as GreA or GreB allows the resumption of elongation from the new 3'terminus. GreA releases sequences of 2 to 3 nucleotides. The chain is Transcription elongation factor GreA from Rhizobium johnstonii (strain DSM 114642 / LMG 32736 / 3841) (Rhizobium leguminosarum bv. viciae).